The following is a 236-amino-acid chain: Protein YIPF6 (236 aa).

Ala2 carries the post-translational modification N-acetylalanine. The Cytoplasmic segment spans residues 2 to 84; sequence AEAEESPGDP…HVLYPRKSNT (83 aa). A Phosphoserine modification is found at Ser7. A helical transmembrane segment spans residues 85–105; sequence LLRDWDLWGPLILCVTLALML. Residues 106–115 are Lumenal-facing; that stretch reads QRDSADSEKD. Residues 116–136 form a helical membrane-spanning segment; sequence GGPQFAEVFVIVWFGAVTITL. The Cytoplasmic portion of the chain corresponds to 137-146; sequence NSKLLGGNIS. A helical membrane pass occupies residues 147–167; it reads FFQSLCVLGYCILPLTVAMLI. At 168 to 184 the chain is on the lumenal side; it reads CRLVLLADPGPVNFMVR. A helical transmembrane segment spans residues 185-205; it reads LFVVIVMFAWSIVASTAFLAD. The Cytoplasmic portion of the chain corresponds to 206–212; it reads SQPPNRR. The helical transmembrane segment at 213 to 233 threads the bilayer; that stretch reads ALAVYPVFLFYFVISWMILTF. The Lumenal segment spans residues 234-236; the sequence is TPQ.

The protein belongs to the YIP1 family. In terms of assembly, predominantly interacts with YIPF1 or YIPF2, but may also form a ternary complex with YIPF1 and YIPF2. This interaction may stabilize YIPF1 and YIPF2.

The protein localises to the golgi apparatus membrane. In terms of biological role, may be required for stable YIPF1 and YIPF2 protein expression. This is Protein YIPF6 (YIPF6) from Homo sapiens (Human).